The following is a 47-amino-acid chain: Sperm protamine P1 (47 aa).

It belongs to the protamine P1 family. As to expression, testis.

It localises to the nucleus. The protein localises to the chromosome. Its function is as follows. Protamines substitute for histones in the chromatin of sperm during the haploid phase of spermatogenesis. They compact sperm DNA into a highly condensed, stable and inactive complex. The chain is Sperm protamine P1 (PRM1) from Myotis daubentonii (Daubenton's bat).